We begin with the raw amino-acid sequence, 111 residues long: Rho GDP-dissociation inhibitor 1 (111 aa).

Residues Lys57 and Lys60 each participate in a glycyl lysine isopeptide (Lys-Gly) (interchain with G-Cter in SUMO1); alternate cross-link. Residues Lys57 and Lys60 each participate in a glycyl lysine isopeptide (Lys-Gly) (interchain with G-Cter in SUMO2); alternate cross-link. Position 60 is an N6-acetyllysine; alternate (Lys60). An N6-succinyllysine; alternate modification is found at Lys60.

The protein belongs to the Rho GDI family. As to quaternary structure, monomer. Interacts with FER. Interacts with PLXNB3. Forms a heterodimer with RAC1. Interacts with RHOA, the affinity is increased by three orders of magnitude when RHOA is prenylated. Interacts with PSMD10; the interaction increases ARHGDIA association with RHOA, leading to ARHGDIA-mediated inactivation of RHOA and ROCK and prolonged AKT activation. Interacts with KANK2; the interaction is direct and may regulate the interaction of ARHGDIA with RHOA, RAC1 and CDC42. Interacts with RHOC. Interacts with CDC42. Interacts with NGFR (via death domain); NGFR binding decreases the affinity for RHOA. Post-translationally, the N-terminus is blocked.

It localises to the cytoplasm. Controls Rho proteins homeostasis. Regulates the GDP/GTP exchange reaction of the Rho proteins by inhibiting the dissociation of GDP from them, and the subsequent binding of GTP to them. Retains Rho proteins such as CDC42, RAC1 and RHOA in an inactive cytosolic pool, regulating their stability and protecting them from degradation. Actively involved in the recycling and distribution of activated Rho GTPases in the cell, mediates extraction from membranes of both inactive and activated molecules due its exceptionally high affinity for prenylated forms. Through the modulation of Rho proteins, may play a role in cell motility regulation. In glioma cells, inhibits cell migration and invasion by mediating the signals of SEMA5A and PLXNB3 that lead to inactivation of RAC1. The sequence is that of Rho GDP-dissociation inhibitor 1 (ARHGDIA) from Cavia porcellus (Guinea pig).